Consider the following 323-residue polypeptide: tRNA dimethylallyltransferase (323 aa).

12–19 contacts ATP; that stretch reads GPTAAGKT. 14-19 provides a ligand contact to substrate; sequence TAAGKT. Interaction with substrate tRNA stretches follow at residues 37–40 and 161–165; these read DSAL and QRLMR.

This sequence belongs to the IPP transferase family. As to quaternary structure, monomer. Mg(2+) is required as a cofactor.

It catalyses the reaction adenosine(37) in tRNA + dimethylallyl diphosphate = N(6)-dimethylallyladenosine(37) in tRNA + diphosphate. Catalyzes the transfer of a dimethylallyl group onto the adenine at position 37 in tRNAs that read codons beginning with uridine, leading to the formation of N6-(dimethylallyl)adenosine (i(6)A). The polypeptide is tRNA dimethylallyltransferase (Pseudomonas aeruginosa (strain UCBPP-PA14)).